Consider the following 103-residue polypeptide: N(4)-acetylcytidine amidohydrolase (103 aa).

Positions 6–100 (ITFFQRFQED…AEDRFYVIEF (95 aa)) constitute an ASCH domain. The active-site Proton acceptor is the lysine 21. Threonine 24 serves as the catalytic Nucleophile. Glutamate 74 functions as the Proton donor in the catalytic mechanism.

The protein belongs to the N(4)-acetylcytidine amidohydrolase family.

The catalysed reaction is N(4)-acetylcytidine + H2O = cytidine + acetate + H(+). It carries out the reaction N(4)-acetyl-2'-deoxycytidine + H2O = 2'-deoxycytidine + acetate + H(+). The enzyme catalyses N(4)-acetylcytosine + H2O = cytosine + acetate + H(+). Functionally, catalyzes the hydrolysis of N(4)-acetylcytidine (ac4C). The chain is N(4)-acetylcytidine amidohydrolase from Klebsiella pneumoniae (strain 342).